The sequence spans 282 residues: Pantothenate synthetase (282 aa).

30–37 (MGYLHEGH) is an ATP binding site. The active-site Proton donor is the H37. Q61 contacts (R)-pantoate. Residue Q61 participates in beta-alanine binding. 147-150 (GQKD) provides a ligand contact to ATP. Position 153 (Q153) interacts with (R)-pantoate. ATP-binding positions include V176 and 184 to 187 (MSSR).

Belongs to the pantothenate synthetase family. In terms of assembly, homodimer.

The protein localises to the cytoplasm. The enzyme catalyses (R)-pantoate + beta-alanine + ATP = (R)-pantothenate + AMP + diphosphate + H(+). It functions in the pathway cofactor biosynthesis; (R)-pantothenate biosynthesis; (R)-pantothenate from (R)-pantoate and beta-alanine: step 1/1. In terms of biological role, catalyzes the condensation of pantoate with beta-alanine in an ATP-dependent reaction via a pantoyl-adenylate intermediate. The protein is Pantothenate synthetase of Pelotomaculum thermopropionicum (strain DSM 13744 / JCM 10971 / SI).